Consider the following 270-residue polypeptide: Putative pyruvate, phosphate dikinase regulatory protein 2 (270 aa).

151-158 contributes to the ADP binding site; the sequence is GVSRTSKT.

Belongs to the pyruvate, phosphate/water dikinase regulatory protein family. PDRP subfamily.

The enzyme catalyses N(tele)-phospho-L-histidyl/L-threonyl-[pyruvate, phosphate dikinase] + ADP = N(tele)-phospho-L-histidyl/O-phospho-L-threonyl-[pyruvate, phosphate dikinase] + AMP + H(+). It carries out the reaction N(tele)-phospho-L-histidyl/O-phospho-L-threonyl-[pyruvate, phosphate dikinase] + phosphate + H(+) = N(tele)-phospho-L-histidyl/L-threonyl-[pyruvate, phosphate dikinase] + diphosphate. Functionally, bifunctional serine/threonine kinase and phosphorylase involved in the regulation of the pyruvate, phosphate dikinase (PPDK) by catalyzing its phosphorylation/dephosphorylation. This chain is Putative pyruvate, phosphate dikinase regulatory protein 2, found in Listeria monocytogenes serotype 4b (strain F2365).